The primary structure comprises 276 residues: Large ribosomal subunit protein uL2 (276 aa).

Residues 225 to 276 (MNPVDHPHGGGEGRAPVGRKHPVTPWGKPAMGAKTRKKRKLSDKLIVKPRNK) are disordered. A compositionally biased stretch (basic residues) spans 258 to 276 (KTRKKRKLSDKLIVKPRNK).

It belongs to the universal ribosomal protein uL2 family. In terms of assembly, part of the 50S ribosomal subunit. Forms a bridge to the 30S subunit in the 70S ribosome.

In terms of biological role, one of the primary rRNA binding proteins. Required for association of the 30S and 50S subunits to form the 70S ribosome, for tRNA binding and peptide bond formation. It has been suggested to have peptidyltransferase activity; this is somewhat controversial. Makes several contacts with the 16S rRNA in the 70S ribosome. The chain is Large ribosomal subunit protein uL2 from Moorella thermoacetica (strain ATCC 39073 / JCM 9320).